The primary structure comprises 678 residues: ATP-dependent RNA helicase DHX58 (678 aa).

The Helicase ATP-binding domain occupies 11–188 (ILPALEGKNI…QGAIDHILQL (178 aa)). An ATP-binding site is contributed by 24–31 (LPTGAGKT). The DECH box signature appears at 131–134 (DECH). The 162-residue stretch at 353-514 (MLERILLKQF…KAVAAVQKMD (162 aa)) folds into the Helicase C-terminal domain. Residues 489 to 546 (EMKRELTNEALEVLMEKAVAAVQKMDPDEFKAKIRDLQQASLVKRAARAAHREIQQGQ) adopt a coiled-coil conformation. Residues 542-669 (IQQGQFLPEH…PVFDILQDCT (128 aa)) enclose the RLR CTR domain. Zn(2+) is bound by residues Cys556, Cys559, Cys612, and Cys615. The RNA-binding stretch occupies residues 572 to 655 (VEGTHHVNVN…KIQAKKWSRV (84 aa)).

The protein belongs to the helicase family. RLR subfamily. As to quaternary structure, monomer in the absence of dsRNA. Homodimer in the presence of dsRNA. Interacts with RIGI (via CARD domain), MAVS/IPS1 and DDX60. Found in a complex with RIGI and IFIH1/MDA5. Interacts with ANKRD17. Directly interacts with ATG5 and ATG12, either as ATG5 and ATG12 monomers or as ATG12-ATG5 conjugates. As to expression, highly expressed in mammary tissues. Expressed in liver and testis. Expressed at lower level in spleen, embryo, mammary gland and breast tumors.

The protein resides in the cytoplasm. The catalysed reaction is ATP + H2O = ADP + phosphate + H(+). Its function is as follows. Acts as a regulator of RIGI and IFIH1/MDA5 mediated antiviral signaling. Cannot initiate antiviral signaling as it lacks the CARD domain required for activating MAVS/IPS1-dependent signaling events. Can have both negative and positive regulatory functions related to RIGI and IFIH1/MDA5 signaling and this role in regulating signaling may be complex and could probably depend on characteristics of the infecting virus or target cells, or both. Its inhibitory action on RIG-I signaling may involve the following mechanisms: competition with RIGI for binding to the viral RNA, binding to RIGI and inhibiting its dimerization and interaction with MAVS/IPS1, competing with IKBKE in its binding to MAVS/IPS1 thereby inhibiting activation of interferon regulatory factor 3 (IRF3). Its positive regulatory role may involve unwinding or stripping nucleoproteins of viral RNA thereby facilitating their recognition by RIGI and IFIH1/MDA5. Involved in the innate immune response to various RNA viruses and some DNA viruses such as poxviruses, and also to the bacterial pathogen Listeria monocytogenes. Can bind both ssRNA and dsRNA, with a higher affinity for dsRNA. Shows a preference to 5'-triphosphorylated RNA, although it can recognize RNA lacking a 5'-triphosphate. The polypeptide is ATP-dependent RNA helicase DHX58 (Mus musculus (Mouse)).